The sequence spans 770 residues: Metabotropic glutamate receptor-like protein F (770 aa).

The N-terminal stretch at 1-22 is a signal peptide; the sequence is MKIKNFIYFLIYFIFLFKVING. At 23 to 370 the chain is on the extracellular side; it reads QNKTCKISVL…STVDYPESLK (348 aa). 6 N-linked (GlcNAc...) asparagine glycosylation sites follow: Asn24, Asn185, Asn260, Asn286, Asn319, and Asn344. Residues 371 to 391 form a helical membrane-spanning segment; it reads IGVTVVSGFCIFLCLISMIIV. The Cytoplasmic segment spans residues 392–405; that stretch reads IKFKEAKVIKSSSP. A helical transmembrane segment spans residues 406 to 426; sequence IFCLLILFGCIVIFVGCIMFA. Residues 427-442 are Extracellular-facing; it reads RSPTDGSCRSRVWLLS. The helical transmembrane segment at 443–463 threads the bilayer; the sequence is LGYTIFLGNLMVKNWRIWLLF. Over 464-483 the chain is Cytoplasmic; the sequence is DNPKLKKRAITNWKLYPWVS. A helical membrane pass occupies residues 484-504; it reads GIVIIDIVILSIWQALGDIVA. Residues 505-528 are Extracellular-facing; it reads ESRTGIDSLTKYEYRNVCASSDQG. A helical transmembrane segment spans residues 529-549; sequence SIALYLLLVFHGLILLVACFI. Residues 550–565 are Cytoplasmic-facing; the sequence is SFKIKVVDIEEFNESK. A helical membrane pass occupies residues 566–586; it reads PITTSVYIITFCLFIVIPIMV. Topologically, residues 587–594 are extracellular; sequence SSPTVTTQ. The chain crosses the membrane as a helical span at residues 595 to 615; the sequence is TTIICICALITTMLSIILLFG. The Cytoplasmic portion of the chain corresponds to 616–770; the sequence is TKFFKMITVG…GQTEIDSNDV (155 aa). The tract at residues 639-740 is disordered; that stretch reads SSHSQRTKSS…EEKQKDEEEI (102 aa). 2 stretches are compositionally biased toward basic and acidic residues: residues 676–693 and 730–740; these read SSEK…KDHM and NEEKQKDEEEI. Positions 715 to 760 form a coiled coil; the sequence is REQINDNIILENNNDNEEKQKDEEEIKEEKLLVSEIQAKRLSLEQN.

It in the N-terminal section; belongs to the BMP lipoprotein family. The protein in the C-terminal section; belongs to the G-protein coupled receptor 3 family. GABA-B receptor subfamily.

It localises to the membrane. The sequence is that of Metabotropic glutamate receptor-like protein F (grlF) from Dictyostelium discoideum (Social amoeba).